The chain runs to 260 residues: Exosome complex component Rrp42 (260 aa).

Belongs to the RNase PH family. Rrp42 subfamily. As to quaternary structure, component of the archaeal exosome complex. Forms a hexameric ring-like arrangement composed of 3 Rrp41-Rrp42 heterodimers. The hexameric ring associates with a trimer of Rrp4 and/or Csl4 subunits.

The protein resides in the cytoplasm. Functionally, non-catalytic component of the exosome, which is a complex involved in RNA degradation. Contributes to the structuring of the Rrp41 active site. In Thermoplasma volcanium (strain ATCC 51530 / DSM 4299 / JCM 9571 / NBRC 15438 / GSS1), this protein is Exosome complex component Rrp42.